Here is a 317-residue protein sequence, read N- to C-terminus: Phospholipase A1 1 (317 aa).

An N-terminal signal peptide occupies residues 1 to 7 (RLIMFVG). A propeptide spanning residues 8–17 (DPSSSNELDR) is cleaved from the precursor. Cys21 and Cys104 are oxidised to a cystine. Asn25 is a glycosylation site (N-linked (GlcNAc...) asparagine). Ser154 functions as the Nucleophile in the catalytic mechanism. Asp182 (charge relay system) is an active-site residue. A disulfide bond links Cys193 and Cys198. Asn229 carries N-linked (GlcNAc...) asparagine glycosylation. Cys236 and Cys244 are oxidised to a cystine. The Charge relay system role is filled by His246. 3 disulfides stabilise this stretch: Cys261/Cys285, Cys262/Cys310, and Cys278/Cys283.

Belongs to the AB hydrolase superfamily. Lipase family. Expressed by the venom gland.

It localises to the secreted. The catalysed reaction is a 1,2-diacyl-sn-glycero-3-phosphocholine + H2O = a 2-acyl-sn-glycero-3-phosphocholine + a fatty acid + H(+). In terms of biological role, catalyzes the hydrolysis of phosphatidylcholine with phospholipase A1 activity. May act as an allergen and induce hemolytic activity. This is Phospholipase A1 1 from Dolichovespula maculata (Bald-faced hornet).